The following is a 452-amino-acid chain: Probable mannose-6-phosphate isomerase (452 aa).

Zn(2+) contacts are provided by Gln141, His143, Glu168, and His295. Arg314 is an active-site residue.

The protein belongs to the mannose-6-phosphate isomerase type 1 family. It depends on Zn(2+) as a cofactor.

The protein localises to the cytoplasm. The enzyme catalyses D-mannose 6-phosphate = D-fructose 6-phosphate. It participates in nucleotide-sugar biosynthesis; GDP-alpha-D-mannose biosynthesis; alpha-D-mannose 1-phosphate from D-fructose 6-phosphate: step 1/2. In terms of biological role, involved in the synthesis of the GDP-mannose and dolichol-phosphate-mannose required for a number of critical mannosyl transfer reactions. In Dictyostelium discoideum (Social amoeba), this protein is Probable mannose-6-phosphate isomerase (mpi).